A 1236-amino-acid polypeptide reads, in one-letter code: Complement factor H (1236 aa).

Residues 1 to 18 form the signal peptide; that stretch reads MRFPAKIVWLVLWTVCVA. Sushi domains are found at residues 19–82, 83–143, 144–207, 208–264, 265–322, 325–383, 385–442, 444–505, 507–562, 565–623, 627–685, 688–745, 750–804, 809–866, 868–936, 937–994, 995–1053, 1054–1111, 1114–1172, and 1173–1235; these read EDCK…ICRK, KPCA…ICEV, VKCL…KCVE, IFCK…TCIE, ITCD…RCAW, CSYP…EEPC, RQCI…RCIR, KTCS…VCIK, CDRP…KAAC, RECS…TCKV, KSCA…VCIE, RTCG…QCIA, RKCK…DCNE, QLCP…RCIE, IGCS…QCVG, LPCG…DCIS, TNCV…ACRD, VSCG…QCKD, GKCG…KCLE, and ACVI…YPRC. 40 cysteine pairs are disulfide-bonded: C21-C66, C52-C80, C85-C129, C114-C141, C146-C192, C178-C205, C210-C251, C237-C262, C267-C309, C294-C320, C325-C372, C355-C383, C387-C429, C414-C440, C446-C492, C475-C503, C507-C551, C534-C562, C567-C609, C595-C621, C629-C672, C658-C683, C690-C732, C718-C743, C752-C791, C780-C802, C811-C853, C839-C864, C870-C923, C909-C934, C939-C981, C967-C992, C997-C1040, C1026-C1051, C1056-C1098, C1084-C1109, C1116-C1159, C1145-C1170, C1174-C1225, and C1208-C1235. Sulfotyrosine is present on residues Y168 and Y170. Sulfotyrosine occurs at positions 465 and 473. A sulfotyrosine mark is found at Y575, Y579, and Y585. Residue N775 is glycosylated (N-linked (GlcNAc...) asparagine). Residue N1100 is glycosylated (N-linked (GlcNAc...) asparagine).

In terms of assembly, homodimer. Also forms homooligomers. Interacts with complement protein C3b; this interaction inhibits complement activation. Interacts with complement protein C3d. Interacts with CR3/ITGAM; this interaction mediates adhesion of neutrophils to pathogens leading to pathogen clearance. Sulfated on tyrosine residues. CFH is one of the most abundant complement components in blood where the liver is the major source of CFH protein in vivo. in addition, CFH is secreted by additional cell types including monocytes, fibroblasts, or endothelial cells.

It is found in the secreted. Glycoprotein that plays an essential role in maintaining a well-balanced immune response by modulating complement activation. Acts as a soluble inhibitor of complement, where its binding to self markers such as glycan structures prevents complement activation and amplification on cell surfaces. Accelerates the decay of the complement alternative pathway (AP) C3 convertase C3bBb, thus preventing local formation of more C3b, the central player of the complement amplification loop. As a cofactor of the serine protease factor I, CFH also regulates proteolytic degradation of already-deposited C3b. In addition, mediates several cellular responses through interaction with specific receptors. For example, interacts with CR3/ITGAM receptor and thereby mediates the adhesion of human neutrophils to different pathogens. In turn, these pathogens are phagocytosed and destroyed. The chain is Complement factor H (CFH) from Bos taurus (Bovine).